The following is a 1597-amino-acid chain: Replicase large subunit (1597 aa).

In terms of domain architecture, Alphavirus-like MT spans Ser72–Val280. Residues Leu791–Arg950 enclose the (+)RNA virus helicase ATP-binding domain. Gly823–Thr830 contacts ATP. The region spanning Arg951–Gln1103 is the (+)RNA virus helicase C-terminal domain. Positions Met1365–Asp1478 constitute a RdRp catalytic domain.

This sequence belongs to the tobamovirus RNA-directed RNA polymerase family. As to quaternary structure, heterodimer of a large and a small subunit.

It catalyses the reaction RNA(n) + a ribonucleoside 5'-triphosphate = RNA(n+1) + diphosphate. The enzyme catalyses ATP + H2O = ADP + phosphate + H(+). Functionally, the replicase large subunit is an RNA-dependent RNA polymerase active in viral RNA replication. Its function is as follows. The replicase small subunit is a methyltransferase active in RNA capping and an RNA helicase. It also acts as a suppressor of RNA-mediated gene silencing, also known as post-transcriptional gene silencing (PTGS), a mechanism of plant viral defense that limits the accumulation of viral RNAs. May mediate silencing suppression through either inhibition of HEN1-mediated siRNA or siRNA demethylation. The polypeptide is Replicase large subunit (Brassica napus (Rape)).